The following is a 274-amino-acid chain: Undecaprenyl-diphosphatase 1 (274 aa).

The next 8 helical transmembrane spans lie at 4-24, 45-65, 84-104, 111-131, 146-166, 186-206, 217-237, and 249-269; these read LLLL…FLPI, SAVF…YEYW, HLAI…LSFG, LFND…IMWI, IGLK…IPGT, ATEF…LLDL, FDWS…LLLI, and FMVF…FAYT.

Belongs to the UppP family.

The protein localises to the cell inner membrane. The catalysed reaction is di-trans,octa-cis-undecaprenyl diphosphate + H2O = di-trans,octa-cis-undecaprenyl phosphate + phosphate + H(+). Its function is as follows. Catalyzes the dephosphorylation of undecaprenyl diphosphate (UPP). Confers resistance to bacitracin. The chain is Undecaprenyl-diphosphatase 1 from Acinetobacter baylyi (strain ATCC 33305 / BD413 / ADP1).